Reading from the N-terminus, the 1241-residue chain is Sterol 3-beta-glucosyltransferase (1241 aa).

Acidic residues predominate over residues 1–11 (MSGIESTEEPC). Disordered stretches follow at residues 1–97 (MSGI…KPSI) and 124–189 (DQQV…TLRK). The segment covering 25–34 (PEERQTRKDS) has biased composition (basic and acidic residues). A compositionally biased stretch (acidic residues) spans 136–155 (ESEDQQADESSDEQEDDDQD). Positions 220 to 267 (NKLKRTFDISDTDVFISDYPCWLMGDVLLQGHLYITKHHILFFAFLPK) constitute a GRAM 1 domain. Residues 271-373 (SISKSGALTT…WVSSLKKHIF (103 aa)) form the PH domain. Residues 499–556 (DDFSQEQESAESSKPVSDDEIVSADDNQELEEKQPQDNLANAEKENHDKVSRANSRRT) form a disordered region. The span at 516-527 (DDEIVSADDNQE) shows a compositional bias: acidic residues. Residues 540–549 (AEKENHDKVS) are compositionally biased toward basic and acidic residues. The GRAM 2 domain occupies 609–675 (ERFRKHFSLT…SDIENVNKEK (67 aa)). Residues 720 to 741 (KGSTDSSPPNASEGSSDESCNL) are disordered. Residues 723–741 (TDSSPPNASEGSSDESCNL) are compositionally biased toward polar residues. 12 residues coordinate UDP-alpha-D-glucose: serine 797, arginine 798, aspartate 800, asparagine 1071, valine 1098, histidine 1100, histidine 1113, serine 1116, glycine 1117, threonine 1118, aspartate 1137, and glutamine 1138.

It belongs to the glycosyltransferase 28 family.

It localises to the cytoplasm. Its subcellular location is the preautophagosomal structure membrane. The catalysed reaction is a sterol + UDP-alpha-D-glucose = a sterol 3-beta-D-glucoside + UDP + H(+). It catalyses the reaction ergosterol + UDP-alpha-D-glucose = ergosteryl 3-beta-D-glucoside + UDP + H(+). Functionally, sterol glycosyltransferase responsible for the glycosylation of ergosterol to form ergosterol-glucoside. Mediates autophagic degradation of peroxisomes (pexophagy). This chain is Sterol 3-beta-glucosyltransferase, found in Pichia angusta (Yeast).